A 256-amino-acid chain; its full sequence is Hemin import ATP-binding protein HmuV (256 aa).

The 237-residue stretch at 2-238 folds into the ABC transporter domain; the sequence is ISAQNLVYSL…QALTMLYGAD (237 aa). 34–41 lines the ATP pocket; that stretch reads GPNGAGKS.

This sequence belongs to the ABC transporter superfamily. Heme (hemin) importer (TC 3.A.1.14.5) family. The complex is composed of two ATP-binding proteins (HmuV), two transmembrane proteins (HmuU) and a solute-binding protein (HmuT).

The protein resides in the cell inner membrane. Its function is as follows. Part of the ABC transporter complex HmuTUV involved in hemin import. Responsible for energy coupling to the transport system. This is Hemin import ATP-binding protein HmuV from Escherichia coli O157:H7.